Here is a 64-residue protein sequence, read N- to C-terminus: MNKVYLVAVLVLFLALTINESNEAVPTGGCPFSDFFCAKRCKDMKFGNTGRCTGPNKTVCKCSI.

The N-terminal stretch at 1 to 21 (MNKVYLVAVLVLFLALTINES) is a signal peptide. 3 cysteine pairs are disulfide-bonded: cysteine 30–cysteine 52, cysteine 37–cysteine 60, and cysteine 41–cysteine 62.

This sequence belongs to the short scorpion toxin superfamily. Potassium channel inhibitor family. Alpha-KTx 11 subfamily. Expressed by the venom gland.

It is found in the secreted. In terms of biological role, this recombinant toxin inhibits mammalian voltage-gated potassium channels Kv1.3/KCNA3 (IC(50)=0.79 nM) and Kv1.2/KCNA2 (IC(50)=26.4 nM). This is Potassium channel toxin alpha-KTx J123 from Olivierus martensii (Manchurian scorpion).